Here is a 375-residue protein sequence, read N- to C-terminus: Queuine tRNA-ribosyltransferase (375 aa).

Residue D89 is the Proton acceptor of the active site. Residues 89 to 93, D143, Q187, and G214 contribute to the substrate site; that span reads DSGGF. Residues 245-251 form an RNA binding region; sequence GVGKPED. Catalysis depends on D264, which acts as the Nucleophile. Positions 269 to 273 are RNA binding; important for wobble base 34 recognition; it reads TRNAR. Positions 302, 304, 307, and 333 each coordinate Zn(2+).

Belongs to the queuine tRNA-ribosyltransferase family. Homodimer. Within each dimer, one monomer is responsible for RNA recognition and catalysis, while the other monomer binds to the replacement base PreQ1. Zn(2+) is required as a cofactor.

It catalyses the reaction 7-aminomethyl-7-carbaguanine + guanosine(34) in tRNA = 7-aminomethyl-7-carbaguanosine(34) in tRNA + guanine. It participates in tRNA modification; tRNA-queuosine biosynthesis. Functionally, catalyzes the base-exchange of a guanine (G) residue with the queuine precursor 7-aminomethyl-7-deazaguanine (PreQ1) at position 34 (anticodon wobble position) in tRNAs with GU(N) anticodons (tRNA-Asp, -Asn, -His and -Tyr). Catalysis occurs through a double-displacement mechanism. The nucleophile active site attacks the C1' of nucleotide 34 to detach the guanine base from the RNA, forming a covalent enzyme-RNA intermediate. The proton acceptor active site deprotonates the incoming PreQ1, allowing a nucleophilic attack on the C1' of the ribose to form the product. After dissociation, two additional enzymatic reactions on the tRNA convert PreQ1 to queuine (Q), resulting in the hypermodified nucleoside queuosine (7-(((4,5-cis-dihydroxy-2-cyclopenten-1-yl)amino)methyl)-7-deazaguanosine). This chain is Queuine tRNA-ribosyltransferase, found in Enterobacter sp. (strain 638).